Consider the following 247-residue polypeptide: Cyclin-Q (247 aa).

This sequence belongs to the cyclin family. Cyclin-like FAM58 subfamily.

May be an activating cyclin for the cyclin-associated kinase CDK10. The chain is Cyclin-Q (ccnq) from Danio rerio (Zebrafish).